The primary structure comprises 356 residues: 3-deoxy-alpha-D-manno-octulosonate 8-oxidase (356 aa).

This sequence belongs to the iron-containing alcohol dehydrogenase family. It depends on a divalent metal cation as a cofactor.

It catalyses the reaction 3-deoxy-alpha-D-manno-oct-2-ulosonate + O2 = 3,8-dideoxy-8-oxo-alpha-D-manno-octulosonate + H2O2. The protein operates within bacterial outer membrane biogenesis; lipopolysaccharide biosynthesis. Its activity is regulated as follows. Inhibited by EDTA. Catalyzes the first step of the biosynthesis of Kdo8N (8-amino-3,8-dideoxy-D-manno-octulosonate) from Kdo (3-deoxy-D-manno-octulosonate). In Shewanella oneidensis (strain ATCC 700550 / JCM 31522 / CIP 106686 / LMG 19005 / NCIMB 14063 / MR-1), this protein is 3-deoxy-alpha-D-manno-octulosonate 8-oxidase.